Consider the following 355-residue polypeptide: Adenine deaminase (355 aa).

Zn(2+)-binding residues include His-23, His-25, and His-211. Glu-214 serves as the catalytic Proton donor. Residue Asp-292 coordinates Zn(2+). Asp-293 is a binding site for substrate.

This sequence belongs to the metallo-dependent hydrolases superfamily. Adenosine and AMP deaminases family. Adenine deaminase type 2 subfamily. Requires Zn(2+) as cofactor.

Its subcellular location is the cytoplasm. The protein localises to the nucleus. The catalysed reaction is adenine + H2O + H(+) = hypoxanthine + NH4(+). Its function is as follows. Catalyzes the hydrolytic deamination of adenine to hypoxanthine. Plays an important role in the purine salvage pathway and in nitrogen catabolism. The chain is Adenine deaminase from Kluyveromyces lactis (strain ATCC 8585 / CBS 2359 / DSM 70799 / NBRC 1267 / NRRL Y-1140 / WM37) (Yeast).